We begin with the raw amino-acid sequence, 512 residues long: Oxalate--CoA ligase (512 aa).

An ATP-binding site is contributed by 168-179 (HTSGTTGRPKVV). 2 positions are modified to phosphoserine: serine 283 and serine 284. An FACS motif is present at residues 381 to 429 (DRFFRTGDEGKLDKDGYVFITGRIKELVNRGGEKISPAEIDAVLMQHPD). The Microbody targeting signal motif lies at 510–512 (AKL).

It belongs to the ATP-dependent AMP-binding enzyme family.

Its subcellular location is the peroxisome matrix. The protein resides in the peroxisome membrane. The catalysed reaction is oxalate + ATP + CoA = oxalyl-CoA + AMP + diphosphate. Catalyzes the first step in a degradation pathway of oxalate to CO(2) to protect the cell against the harmful effects of oxalate derived from endogenous processes or an environmental sources. This is Oxalate--CoA ligase (pcs60) from Schizosaccharomyces pombe (strain 972 / ATCC 24843) (Fission yeast).